Reading from the N-terminus, the 372-residue chain is Queuine tRNA-ribosyltransferase (372 aa).

Asp-90 serves as the catalytic Proton acceptor. Residues 90–94 (DSGGF), Asp-144, Gln-193, and Gly-220 contribute to the substrate site. The RNA binding stretch occupies residues 251 to 257 (GVGTPED). The active-site Nucleophile is the Asp-270. The interval 275–279 (TRNAR) is RNA binding; important for wobble base 34 recognition. Residues Cys-308, Cys-310, Cys-313, and His-339 each coordinate Zn(2+).

The protein belongs to the queuine tRNA-ribosyltransferase family. Homodimer. Within each dimer, one monomer is responsible for RNA recognition and catalysis, while the other monomer binds to the replacement base PreQ1. It depends on Zn(2+) as a cofactor.

It catalyses the reaction 7-aminomethyl-7-carbaguanine + guanosine(34) in tRNA = 7-aminomethyl-7-carbaguanosine(34) in tRNA + guanine. The protein operates within tRNA modification; tRNA-queuosine biosynthesis. In terms of biological role, catalyzes the base-exchange of a guanine (G) residue with the queuine precursor 7-aminomethyl-7-deazaguanine (PreQ1) at position 34 (anticodon wobble position) in tRNAs with GU(N) anticodons (tRNA-Asp, -Asn, -His and -Tyr). Catalysis occurs through a double-displacement mechanism. The nucleophile active site attacks the C1' of nucleotide 34 to detach the guanine base from the RNA, forming a covalent enzyme-RNA intermediate. The proton acceptor active site deprotonates the incoming PreQ1, allowing a nucleophilic attack on the C1' of the ribose to form the product. After dissociation, two additional enzymatic reactions on the tRNA convert PreQ1 to queuine (Q), resulting in the hypermodified nucleoside queuosine (7-(((4,5-cis-dihydroxy-2-cyclopenten-1-yl)amino)methyl)-7-deazaguanosine). The chain is Queuine tRNA-ribosyltransferase from Campylobacter hominis (strain ATCC BAA-381 / DSM 21671 / CCUG 45161 / LMG 19568 / NCTC 13146 / CH001A).